The primary structure comprises 290 residues: 4-diphosphocytidyl-2-C-methyl-D-erythritol kinase (290 aa).

Lys-8 is an active-site residue. An ATP-binding site is contributed by Pro-92–Thr-102. Residue Asp-134 is part of the active site.

This sequence belongs to the GHMP kinase family. IspE subfamily.

The catalysed reaction is 4-CDP-2-C-methyl-D-erythritol + ATP = 4-CDP-2-C-methyl-D-erythritol 2-phosphate + ADP + H(+). Its pathway is isoprenoid biosynthesis; isopentenyl diphosphate biosynthesis via DXP pathway; isopentenyl diphosphate from 1-deoxy-D-xylulose 5-phosphate: step 3/6. Catalyzes the phosphorylation of the position 2 hydroxy group of 4-diphosphocytidyl-2C-methyl-D-erythritol. This chain is 4-diphosphocytidyl-2-C-methyl-D-erythritol kinase, found in Caldicellulosiruptor saccharolyticus (strain ATCC 43494 / DSM 8903 / Tp8T 6331).